Consider the following 799-residue polypeptide: DNA ligase (799 aa).

The segment covering 1–11 (MTEVKTGRVVD) has biased composition (basic and acidic residues). Positions 1-35 (MTEVKTGRVVDDAPVNDAPENNAAEATSPARHDAI) are disordered. NAD(+) is bound by residues 67 to 71 (DAEYD), 116 to 117 (SL), and Asp-147. Lys-149 (N6-AMP-lysine intermediate) is an active-site residue. 4 residues coordinate NAD(+): Arg-170, Glu-207, Lys-327, and Lys-351. Residues Cys-445, Cys-448, Cys-463, and Cys-468 each coordinate Zn(2+). Residues 634-723 (AIVLPLQGLK…VASVDASEAV (90 aa)) form the BRCT domain. Residues 720–799 (SEAVAEETPP…RGRAEQLKLF (80 aa)) form a disordered region. Residues 755-767 (GSASGDDSRGAAA) are compositionally biased toward low complexity. A compositionally biased stretch (basic and acidic residues) spans 787–799 (DVPRGRAEQLKLF).

The protein belongs to the NAD-dependent DNA ligase family. LigA subfamily. The cofactor is Mg(2+). Mn(2+) is required as a cofactor.

The catalysed reaction is NAD(+) + (deoxyribonucleotide)n-3'-hydroxyl + 5'-phospho-(deoxyribonucleotide)m = (deoxyribonucleotide)n+m + AMP + beta-nicotinamide D-nucleotide.. Its function is as follows. DNA ligase that catalyzes the formation of phosphodiester linkages between 5'-phosphoryl and 3'-hydroxyl groups in double-stranded DNA using NAD as a coenzyme and as the energy source for the reaction. It is essential for DNA replication and repair of damaged DNA. The polypeptide is DNA ligase (Nitratidesulfovibrio vulgaris (strain ATCC 29579 / DSM 644 / CCUG 34227 / NCIMB 8303 / VKM B-1760 / Hildenborough) (Desulfovibrio vulgaris)).